The primary structure comprises 193 residues: Ribosomal RNA small subunit methyltransferase G (193 aa).

S-adenosyl-L-methionine is bound by residues glycine 64, leucine 69, 113 to 114, and arginine 126; that span reads IE.

Belongs to the methyltransferase superfamily. RNA methyltransferase RsmG family.

The protein resides in the cytoplasm. The enzyme catalyses guanosine(527) in 16S rRNA + S-adenosyl-L-methionine = N(7)-methylguanosine(527) in 16S rRNA + S-adenosyl-L-homocysteine. In terms of biological role, specifically methylates the N7 position of guanine in position 527 of 16S rRNA. This chain is Ribosomal RNA small subunit methyltransferase G, found in Rickettsia massiliae (strain Mtu5).